We begin with the raw amino-acid sequence, 377 residues long: Glutamate 5-kinase (377 aa).

Lys20 contacts ATP. The substrate site is built by Ser60, Asp147, and Asn159. An ATP-binding site is contributed by 179–180 (SD). The PUA domain occupies 281-355 (HGQLHLDAGA…GQSTSDLPEF (75 aa)).

It belongs to the glutamate 5-kinase family.

The protein localises to the cytoplasm. The catalysed reaction is L-glutamate + ATP = L-glutamyl 5-phosphate + ADP. Its pathway is amino-acid biosynthesis; L-proline biosynthesis; L-glutamate 5-semialdehyde from L-glutamate: step 1/2. Catalyzes the transfer of a phosphate group to glutamate to form L-glutamate 5-phosphate. The polypeptide is Glutamate 5-kinase (Corynebacterium jeikeium (strain K411)).